The sequence spans 434 residues: Tol-Pal system protein TolB (434 aa).

A signal peptide spans 1–21 (MIVRRALALAALALAASPALA). The interval 411–434 (GDRQTPVTSGKTDLAAPAWGPLAP) is disordered.

The protein belongs to the TolB family. As to quaternary structure, the Tol-Pal system is composed of five core proteins: the inner membrane proteins TolA, TolQ and TolR, the periplasmic protein TolB and the outer membrane protein Pal. They form a network linking the inner and outer membranes and the peptidoglycan layer.

The protein localises to the periplasm. Functionally, part of the Tol-Pal system, which plays a role in outer membrane invagination during cell division and is important for maintaining outer membrane integrity. In Anaeromyxobacter dehalogenans (strain 2CP-C), this protein is Tol-Pal system protein TolB.